The primary structure comprises 873 residues: Bifunctional uridylyltransferase/uridylyl-removing enzyme (873 aa).

The uridylyltransferase stretch occupies residues 1-332 (MKYLSPLSLS…HQGEQDDAII (332 aa)). Residues 333 to 692 (IDDDFQRRGR…ISKNASRGGT (360 aa)) form a uridylyl-removing region. The HD domain occupies 451–573 (VDEHSIRLLK…VRDEERLDYL (123 aa)). ACT domains lie at 693–777 (EIFV…RPPR) and 800–873 (LMEF…RLSS).

Belongs to the GlnD family. It depends on Mg(2+) as a cofactor.

It catalyses the reaction [protein-PII]-L-tyrosine + UTP = [protein-PII]-uridylyl-L-tyrosine + diphosphate. The catalysed reaction is [protein-PII]-uridylyl-L-tyrosine + H2O = [protein-PII]-L-tyrosine + UMP + H(+). Its activity is regulated as follows. Uridylyltransferase (UTase) activity is inhibited by glutamine, while glutamine activates uridylyl-removing (UR) activity. Modifies, by uridylylation and deuridylylation, the PII regulatory proteins (GlnB and homologs), in response to the nitrogen status of the cell that GlnD senses through the glutamine level. Under low glutamine levels, catalyzes the conversion of the PII proteins and UTP to PII-UMP and PPi, while under higher glutamine levels, GlnD hydrolyzes PII-UMP to PII and UMP (deuridylylation). Thus, controls uridylylation state and activity of the PII proteins, and plays an important role in the regulation of nitrogen assimilation and metabolism. The sequence is that of Bifunctional uridylyltransferase/uridylyl-removing enzyme from Aliivibrio fischeri (strain MJ11) (Vibrio fischeri).